Consider the following 149-residue polypeptide: UPF0756 membrane protein BBR47_12340 (149 aa).

4 helical membrane passes run 6–26 (IILL…LVYA), 48–68 (PMFH…IAKG), 86–106 (IAIL…SILP), and 120–140 (LLAV…AGCI).

Belongs to the UPF0756 family.

The protein localises to the cell membrane. This Brevibacillus brevis (strain 47 / JCM 6285 / NBRC 100599) protein is UPF0756 membrane protein BBR47_12340.